The chain runs to 412 residues: Yellow-related salivary protein LJM17 (412 aa).

An N-terminal signal peptide occupies residues 1–18; the sequence is MRFFFVFLAIVLFQGIHG. N-linked (GlcNAc...) asparagine glycosylation occurs at asparagine 29.

It belongs to the major royal jelly protein family. Salivary gland.

It is found in the secreted. Its function is as follows. Probably modulates blood feeding of sand flies on vertebrate species by binding and sequestering different mediators involved in the host response. Binds biogenic amines. Binds serotonin with high affinity. Binds noradrenaline but not adrenaline. Binds dopamine and octopamine. Binds histamine. Inhibits host smooth muscle contraction induced by histamine in bioassay with guinea pig ileum. Immunogenic; elicits antibody production in the host. Functions as a chemoattractant for host neutrophils; likely acts through a G-protein-coupled receptor and effect is dependent on calcium influx. This is Yellow-related salivary protein LJM17 from Lutzomyia longipalpis (Sand fly).